The following is a 1011-amino-acid chain: Unconventional myosin ID (1011 aa).

The Myosin motor domain maps to 7–690 (AGVQDFVLLD…TLFALEHQRN (684 aa)). 100-107 (GESGAGKT) lines the ATP pocket. The segment at 567–589 (MADLVVTLLKKEPFYVRCIKPND) is actin-binding. 2 IQ domains span residues 694–714 (PHIV…RNFK) and 716–736 (MKAA…SYVQ). The TH1 domain maps to 806–1007 (AGRRPYWGQA…EGNIIFEVPA (202 aa)).

This sequence belongs to the TRAFAC class myosin-kinesin ATPase superfamily. Myosin family. In terms of assembly, binds to F-actin. Interacts with arm. Interacts with shg. Interacts with ds (via intracellular region). In the embryo, expressed in gastric caeca, midgut cells of the proventriculus, and in the mid and hindgut. In the larval gut brush border, expression is in the terminal web domain. In the adult gut brush border, expression remains in the web domain and has also moved into the microvilli. Also expressed at low levels in follicle cells during oogenesis.

The protein localises to the cytoplasm. It is found in the cell cortex. The protein resides in the cytoskeleton. Its subcellular location is the cell membrane. It localises to the cell junction. The protein localises to the adherens junction. It is found in the cell projection. Its function is as follows. Unconventional myosin that functions as actin-based motor protein with ATPase activity. Binds to membranes enriched in phosphatidylinositol 4-5-bisphosphate, and can glide along actin filaments when anchored to a lipid bilayer. Generates left-right asymmetry at the level of single cells, organs and the whole body via its interaction with the actin cytoskeleton, both in the embryo and the adult. Normal left-right asymmetry of the larval midgut and hindgut requires expression in the embryonic hindgut epithelium during a critical time period, 10 to 12.75 hours after egg laying. This period corresponds to a late stage of germband retraction, and precedes left-right asymmetric morphogenesis. Expression in segment H1 of the imaginal ring is required at 0 to 24 hours after pupation for changes of cell shape and orientation in the H2 segment, which then gives rise to normal, dextral looping of the adult hindgut. Required during a critical period, 126-132 hours after egg laying, for normal, dextral rotation of the adult male genitalia. Has a double role by promoting dextral rotation in the posterior compartment of segment A8 of the male genital disk, and in repressing sinistral looping in the anterior compartment. The protein is Unconventional myosin ID of Drosophila melanogaster (Fruit fly).